A 137-amino-acid polypeptide reads, in one-letter code: 6,7-dimethyl-8-ribityllumazine synthase (137 aa).

Residues Phe-11, 43–45 (SFD), and 67–69 (CVI) each bind 5-amino-6-(D-ribitylamino)uracil. Residue 72 to 73 (DT) coordinates (2S)-2-hydroxy-3-oxobutyl phosphate. His-75 (proton donor) is an active-site residue. Leu-100 contributes to the 5-amino-6-(D-ribitylamino)uracil binding site. Arg-115 is a (2S)-2-hydroxy-3-oxobutyl phosphate binding site.

The protein belongs to the DMRL synthase family. In terms of assembly, forms an icosahedral capsid composed of 60 subunits, arranged as a dodecamer of pentamers.

It carries out the reaction (2S)-2-hydroxy-3-oxobutyl phosphate + 5-amino-6-(D-ribitylamino)uracil = 6,7-dimethyl-8-(1-D-ribityl)lumazine + phosphate + 2 H2O + H(+). The protein operates within cofactor biosynthesis; riboflavin biosynthesis; riboflavin from 2-hydroxy-3-oxobutyl phosphate and 5-amino-6-(D-ribitylamino)uracil: step 1/2. Catalyzes the formation of 6,7-dimethyl-8-ribityllumazine by condensation of 5-amino-6-(D-ribitylamino)uracil with 3,4-dihydroxy-2-butanone 4-phosphate. This is the penultimate step in the biosynthesis of riboflavin. This is 6,7-dimethyl-8-ribityllumazine synthase from Methanococcus maripaludis (strain C6 / ATCC BAA-1332).